A 386-amino-acid chain; its full sequence is Microtubule-binding protein TANGLED1 (386 aa).

5 disordered regions span residues 83-105, 140-202, 244-266, 303-330, and 345-386; these read RMRGGASAQKRSPSGKFGGGVGG, AAGA…RVRS, HASTSAATDPCATPSPSKKQKRL, PARPAAVSPPPPVKAQASPAKTRRCSFS, and RLSL…ISSR. The segment covering 170–180 has biased composition (basic residues); it reads RARRAREKQSH. The segment covering 181-193 has biased composition (low complexity); the sequence is RGGAATRGADAAT. Residues 375-386 are compositionally biased toward polar residues; it reads TVRTVSSKISSR.

As to expression, expressed in vegetative shoot tips consisting of leaf primordia and the bases of immature leaves, the shoot apical meristem, and unexpanded stem tissue. Strongly expressed in tissues enriched in dividing cells: ear primordia and embryos.

It localises to the cytoplasm. Its subcellular location is the cytoskeleton. The protein localises to the spindle. The protein resides in the phragmoplast. Its function is as follows. Is required for spatial control cell division during leaf development. Through an association with microtubules, acts both for the positioning of cytoskeletal arrays that establish planes of cell division during prophase and for spatial guidance of expanding phragmoplasts toward preestablished cortical division sites (CDS) during cytokinesis. This is Microtubule-binding protein TANGLED1 (TAN1) from Zea mays (Maize).